Consider the following 195-residue polypeptide: Probable GTP-binding protein EngB (195 aa).

The EngB-type G domain occupies 22 to 195 (GYPEIALVGR…WKWIEDRMGE (174 aa)). GTP-binding positions include 30 to 37 (GRSNVGKS), 57 to 61 (GKTQT), 75 to 78 (DVPG), 142 to 145 (TKSD), and 173 to 176 (MFSA). Residues S37 and T59 each coordinate Mg(2+).

The protein belongs to the TRAFAC class TrmE-Era-EngA-EngB-Septin-like GTPase superfamily. EngB GTPase family. Mg(2+) is required as a cofactor.

In terms of biological role, necessary for normal cell division and for the maintenance of normal septation. In Pediococcus pentosaceus (strain ATCC 25745 / CCUG 21536 / LMG 10740 / 183-1w), this protein is Probable GTP-binding protein EngB.